An 89-amino-acid chain; its full sequence is Small ribosomal subunit protein uS15 (89 aa).

This sequence belongs to the universal ribosomal protein uS15 family. Part of the 30S ribosomal subunit. Forms a bridge to the 50S subunit in the 70S ribosome, contacting the 23S rRNA.

In terms of biological role, one of the primary rRNA binding proteins, it binds directly to 16S rRNA where it helps nucleate assembly of the platform of the 30S subunit by binding and bridging several RNA helices of the 16S rRNA. Its function is as follows. Forms an intersubunit bridge (bridge B4) with the 23S rRNA of the 50S subunit in the ribosome. The polypeptide is Small ribosomal subunit protein uS15 (Geobacillus sp. (strain WCH70)).